Consider the following 503-residue polypeptide: Aromatase (503 aa).

Transmembrane regions (helical) follow at residues 19-39 (EVAP…LLVW), 51-71 (GYFL…MGIG), and 303-323 (MLIA…FLIA). 2 residues coordinate substrate: Asp309 and Met374. Cys437 is a heme binding site.

This sequence belongs to the cytochrome P450 family. Requires heme as cofactor.

It is found in the endoplasmic reticulum membrane. It localises to the microsome membrane. The enzyme catalyses testosterone + 3 reduced [NADPH--hemoprotein reductase] + 3 O2 = 17beta-estradiol + formate + 3 oxidized [NADPH--hemoprotein reductase] + 4 H2O + 4 H(+). It carries out the reaction androst-4-ene-3,17-dione + 3 reduced [NADPH--hemoprotein reductase] + 3 O2 = estrone + formate + 3 oxidized [NADPH--hemoprotein reductase] + 4 H2O + 4 H(+). It catalyses the reaction androst-4-ene-3,17-dione + reduced [NADPH--hemoprotein reductase] + O2 = 19-hydroxyandrost-4-ene-3,17-dione + oxidized [NADPH--hemoprotein reductase] + H2O + H(+). The catalysed reaction is 19-hydroxyandrost-4-ene-3,17-dione + reduced [NADPH--hemoprotein reductase] + O2 = 19-oxo-androst-4-ene-3,17-dione + oxidized [NADPH--hemoprotein reductase] + 2 H2O + H(+). The enzyme catalyses 19-oxo-androst-4-ene-3,17-dione + reduced [NADPH--hemoprotein reductase] + O2 = estrone + formate + oxidized [NADPH--hemoprotein reductase] + H2O + 2 H(+). It carries out the reaction estrone + reduced [NADPH--hemoprotein reductase] + O2 = 2-hydroxyestrone + oxidized [NADPH--hemoprotein reductase] + H2O + H(+). It catalyses the reaction 17beta-hydroxy-5alpha-androstan-3-one + reduced [NADPH--hemoprotein reductase] + O2 = 17beta,19-dihydroxy-3-oxo-5alpha-androstanone + oxidized [NADPH--hemoprotein reductase] + H2O + H(+). The catalysed reaction is 17beta,19-dihydroxy-3-oxo-5alpha-androstanone + reduced [NADPH--hemoprotein reductase] + O2 = 17beta-hydroxy-3,19-dioxo-5alpha-androstanone + oxidized [NADPH--hemoprotein reductase] + 2 H2O + H(+). The enzyme catalyses 17beta-hydroxy-3,19-dioxo-5alpha-androstanone + reduced [NADPH--hemoprotein reductase] + O2 = 17beta-hydroxy-3-oxo-19-nor-5alpha-androst-1-ene + formate + oxidized [NADPH--hemoprotein reductase] + H2O + 2 H(+). The protein operates within steroid hormone biosynthesis. In terms of biological role, a cytochrome P450 monooxygenase that catalyzes the conversion of C19 androgens, androst-4-ene-3,17-dione (androstenedione) and testosterone to the C18 estrogens, estrone and estradiol, respectively. Catalyzes three successive oxidations of C19 androgens: two conventional oxidations at C19 yielding 19-hydroxy and 19-oxo/19-aldehyde derivatives, followed by a third oxidative aromatization step that involves C1-beta hydrogen abstraction combined with cleavage of the C10-C19 bond to yield a phenolic A ring and formic acid. Alternatively, the third oxidative reaction yields a 19-norsteroid and formic acid. Converts dihydrotestosterone to delta1,10-dehydro 19-nordihydrotestosterone and may play a role in homeostasis of this potent androgen. Also displays 2-hydroxylase activity toward estrone. Mechanistically, uses molecular oxygen inserting one oxygen atom into a substrate, and reducing the second into a water molecule, with two electrons provided by NADPH via cytochrome P450 reductase (CPR; NADPH-ferrihemoprotein reductase). The polypeptide is Aromatase (CYP19A1) (Leucopleurus acutus (Atlantic white-sided dolphin)).